The following is a 216-amino-acid chain: GTP cyclohydrolase 1 2 (216 aa).

The protein belongs to the GTP cyclohydrolase I family. In terms of assembly, homomer.

It carries out the reaction GTP + H2O = 7,8-dihydroneopterin 3'-triphosphate + formate + H(+). Its pathway is cofactor biosynthesis; 7,8-dihydroneopterin triphosphate biosynthesis; 7,8-dihydroneopterin triphosphate from GTP: step 1/1. This chain is GTP cyclohydrolase 1 2 (folE2), found in Nostoc sp. (strain PCC 7120 / SAG 25.82 / UTEX 2576).